Consider the following 338-residue polypeptide: Probable tRNA pseudouridine synthase B (338 aa).

The active-site Nucleophile is the Asp-78. The PUA domain maps to 245 to 320 (LPKIILRDSA…LAATSVRIMM (76 aa)).

The protein belongs to the pseudouridine synthase TruB family. Type 2 subfamily.

The enzyme catalyses uridine(55) in tRNA = pseudouridine(55) in tRNA. Could be responsible for synthesis of pseudouridine from uracil-55 in the psi GC loop of transfer RNAs. This chain is Probable tRNA pseudouridine synthase B, found in Methanosarcina barkeri (strain Fusaro / DSM 804).